Consider the following 208-residue polypeptide: Small ribosomal subunit protein uS4 (208 aa).

In terms of domain architecture, S4 RNA-binding spans 98-164 (TRLDNVVYRL…PKVKSIREIA (67 aa)).

It belongs to the universal ribosomal protein uS4 family. Part of the 30S ribosomal subunit. Contacts protein S5. The interaction surface between S4 and S5 is involved in control of translational fidelity.

One of the primary rRNA binding proteins, it binds directly to 16S rRNA where it nucleates assembly of the body of the 30S subunit. In terms of biological role, with S5 and S12 plays an important role in translational accuracy. The polypeptide is Small ribosomal subunit protein uS4 (Ruminiclostridium cellulolyticum (strain ATCC 35319 / DSM 5812 / JCM 6584 / H10) (Clostridium cellulolyticum)).